A 662-amino-acid polypeptide reads, in one-letter code: Glutathione hydrolase 7 (662 aa).

At 1–106 the chain is on the cytoplasmic side; it reads MAAENEASQE…ASECSCRQDG (106 aa). Serine 17, serine 72, serine 79, and serine 83 each carry phosphoserine. Residues 26-90 are disordered; the sequence is SFPRLPEDEP…DGSPLRETRK (65 aa). Low complexity predominate over residues 72-83; it reads SSSSEMGSQDGS. The helical; Signal-anchor for type II membrane protein transmembrane segment at 107–127 threads the bilayer; the sequence is LTVIVTACLTFATGVTVALIM. The Extracellular portion of the chain corresponds to 128-662; the sequence is QIYFGDPQIF…SPDAAGATIL (535 aa). N-linked (GlcNAc...) asparagine glycosylation is found at asparagine 198, asparagine 267, asparagine 283, asparagine 330, asparagine 353, asparagine 394, asparagine 452, asparagine 519, and asparagine 586.

It belongs to the gamma-glutamyltransferase family. Heterodimer composed of the light and heavy chains. The active site is located in the light chain. In terms of processing, cleaved by autocatalysis into a large and a small subunit and the autocatalytic cleavage is essential to the functional activation of the enzyme.

The protein resides in the membrane. It catalyses the reaction an N-terminal (5-L-glutamyl)-[peptide] + an alpha-amino acid = 5-L-glutamyl amino acid + an N-terminal L-alpha-aminoacyl-[peptide]. It carries out the reaction glutathione + H2O = L-cysteinylglycine + L-glutamate. The catalysed reaction is an S-substituted glutathione + H2O = an S-substituted L-cysteinylglycine + L-glutamate. The protein operates within sulfur metabolism; glutathione metabolism. In terms of biological role, hydrolyzes and transfers gamma-glutamyl moieties from glutathione and other gamma-glutamyl compounds to acceptors. The chain is Glutathione hydrolase 7 from Bos taurus (Bovine).